The following is a 936-amino-acid chain: Intimin (936 aa).

The first 41 residues, 1–41 (MIIHGFCTGTRHKHKLRKTFIMLGAGLGLFFSVNQNSFANG), serve as a signal peptide directing secretion. The 50-residue stretch at 63-112 (LFYTLKTGESVAQLSKSQGISVPVIWSLNKHLYSSESEMMKASPGQQIIL) folds into the LysM domain. 2 Big-1 domains span residues 557–650 (ITNF…VIFV) and 657–748 (ITEI…VEFF). The BIG2 domain maps to 780–831 (KLQATGGNGKYTWKSSNTKIASVDNSGVITLNEKGSATITVVSGDNQSATYT). An intrachain disulfide couples C857 to C934.

This sequence belongs to the intimin/invasin family.

The protein localises to the cell outer membrane. Its function is as follows. An inverse autotransporter. This Citrobacter freundii protein is Intimin (eae).